A 558-amino-acid polypeptide reads, in one-letter code: Potassium-transporting ATPase potassium-binding subunit (558 aa).

11 consecutive transmembrane segments (helical) span residues 1–21 (MDTL…VLVH), 58–78 (WPAY…VVYG), 85–105 (FLPY…NTAV), 130–150 (GLAV…IALV), 179–199 (LSLV…FAGF), 245–265 (PTAW…FSLP), 279–299 (TAIA…LTLF), 374–394 (GLYG…LLVG), 416–436 (ILVT…IPAV), 484–504 (ALGV…LALA), and 527–547 (FVGL…FPVL).

This sequence belongs to the KdpA family. The system is composed of three essential subunits: KdpA, KdpB and KdpC.

It localises to the cell membrane. Functionally, part of the high-affinity ATP-driven potassium transport (or Kdp) system, which catalyzes the hydrolysis of ATP coupled with the electrogenic transport of potassium into the cytoplasm. This subunit binds the extracellular potassium ions and delivers the ions to the membrane domain of KdpB through an intramembrane tunnel. The chain is Potassium-transporting ATPase potassium-binding subunit from Clavibacter sepedonicus (Clavibacter michiganensis subsp. sepedonicus).